The following is a 218-amino-acid chain: uncharacterized protein (218 aa).

2 helical membrane-spanning segments follow: residues 8 to 28 (LAVF…ATAG) and 158 to 178 (ILFY…FLLI).

The protein localises to the cell membrane. This is an uncharacterized protein from Mycoplasma genitalium (strain ATCC 33530 / DSM 19775 / NCTC 10195 / G37) (Mycoplasmoides genitalium).